The sequence spans 256 residues: Astacin-like metalloprotease toxin 2 (256 aa).

A signal peptide spans 1-24; that stretch reads MIPDVGFLVLLTGALFICIKAAPA. The propeptide occupies 25–52; it reads TTDVDPTFEGRIVMEGDILIREEQLTER. Residues 53–250 form the Peptidase M12A domain; it reads NAIALENMRW…KKINTLYNCP (198 aa). 2 disulfides stabilise this stretch: cysteine 94/cysteine 249 and cysteine 117/cysteine 136. Position 144 (histidine 144) interacts with Zn(2+). Residue glutamate 145 is part of the active site. Positions 148 and 154 each coordinate Zn(2+).

In terms of assembly, monomer. Requires Zn(2+) as cofactor. As to expression, expressed by the venom gland.

It is found in the secreted. Inhibited by 1,10-phenanthroline. Its function is as follows. Zinc metalloprotease. Provoques deadhesion of endothelial cells from cell cultures, and also degradation of fibronectin, fibrinogen and gelatin in vitro. Its role in the venom is not fully understood but it might act as a spreading factor that facilitates diffusion of other venom toxins. Alternatively, it might be involved in the proteolytic processing of other venom toxins or it might play a role in extra-oral digestion of prey. In Loxosceles intermedia (Brown spider), this protein is Astacin-like metalloprotease toxin 2.